Reading from the N-terminus, the 69-residue chain is UPF0248 protein AF_0420 (69 aa).

It belongs to the UPF0248 family.

The protein is UPF0248 protein AF_0420 of Archaeoglobus fulgidus (strain ATCC 49558 / DSM 4304 / JCM 9628 / NBRC 100126 / VC-16).